We begin with the raw amino-acid sequence, 1030 residues long: Arrestin domain-containing protein F (1030 aa).

Disordered stretches follow at residues 1-27 and 119-154; these read MEII…GSKR and ENKN…NNPL. Residues 128–137 are compositionally biased toward acidic residues; sequence NFDDGEEDDT. Over residues 142 to 152 the composition is skewed to low complexity; it reads NINNKNNNNNN. 2 coiled-coil regions span residues 320–374 and 544–577; these read HQLE…HNNN and QKLN…IRDQ. Disordered regions lie at residues 539 to 572 and 885 to 931; these read SPQS…NSES and NNEK…NNNN. Basic and acidic residues predominate over residues 547–562; it reads NKKDKEKEKEKEKEND. The span at 910-931 shows a compositional bias: low complexity; sequence SPSSSSFLSNSSNTSSSKNNNN.

It belongs to the arrestin family.

The protein is Arrestin domain-containing protein F (adcF) of Dictyostelium discoideum (Social amoeba).